A 395-amino-acid chain; its full sequence is Imidazolonepropionase (395 aa).

Histidine 63 and histidine 65 together coordinate Fe(3+). 2 residues coordinate Zn(2+): histidine 63 and histidine 65. Residues arginine 72, tyrosine 135, and histidine 168 each coordinate 4-imidazolone-5-propanoate. Tyrosine 135 contributes to the N-formimidoyl-L-glutamate binding site. Histidine 233 is a Fe(3+) binding site. Histidine 233 provides a ligand contact to Zn(2+). Glutamine 236 is a binding site for 4-imidazolone-5-propanoate. Residue aspartate 308 participates in Fe(3+) binding. Aspartate 308 is a Zn(2+) binding site. N-formimidoyl-L-glutamate is bound by residues asparagine 310 and glycine 312. Threonine 313 lines the 4-imidazolone-5-propanoate pocket.

Belongs to the metallo-dependent hydrolases superfamily. HutI family. Zn(2+) serves as cofactor. Fe(3+) is required as a cofactor.

It is found in the cytoplasm. The catalysed reaction is 4-imidazolone-5-propanoate + H2O = N-formimidoyl-L-glutamate. It functions in the pathway amino-acid degradation; L-histidine degradation into L-glutamate; N-formimidoyl-L-glutamate from L-histidine: step 3/3. Functionally, catalyzes the hydrolytic cleavage of the carbon-nitrogen bond in imidazolone-5-propanoate to yield N-formimidoyl-L-glutamate. It is the third step in the universal histidine degradation pathway. The protein is Imidazolonepropionase of Cereibacter sphaeroides (strain ATCC 17029 / ATH 2.4.9) (Rhodobacter sphaeroides).